Reading from the N-terminus, the 188-residue chain is Sec-independent protein translocase protein TatB (188 aa).

The helical transmembrane segment at 1–21 (MFDIGWSELVVIGVVALVAIG) threads the bilayer. The tract at residues 147 to 188 (LPVPAETHALATTDLAPPDLAHPAPAHPEPTNSEPAKDAKAS) is disordered. The segment covering 160 to 170 (DLAPPDLAHPA) has biased composition (low complexity).

It belongs to the TatB family. As to quaternary structure, the Tat system comprises two distinct complexes: a TatABC complex, containing multiple copies of TatA, TatB and TatC subunits, and a separate TatA complex, containing only TatA subunits. Substrates initially bind to the TatABC complex, which probably triggers association of the separate TatA complex to form the active translocon.

Its subcellular location is the cell inner membrane. Part of the twin-arginine translocation (Tat) system that transports large folded proteins containing a characteristic twin-arginine motif in their signal peptide across membranes. Together with TatC, TatB is part of a receptor directly interacting with Tat signal peptides. TatB may form an oligomeric binding site that transiently accommodates folded Tat precursor proteins before their translocation. The polypeptide is Sec-independent protein translocase protein TatB (Rhodopseudomonas palustris (strain HaA2)).